The following is a 104-amino-acid chain: Large ribosomal subunit protein bL21 (104 aa).

It belongs to the bacterial ribosomal protein bL21 family. In terms of assembly, part of the 50S ribosomal subunit. Contacts protein L20.

In terms of biological role, this protein binds to 23S rRNA in the presence of protein L20. The sequence is that of Large ribosomal subunit protein bL21 from Tropheryma whipplei (strain Twist) (Whipple's bacillus).